Consider the following 2225-residue polypeptide: Multifunctional protein CAD (2225 aa).

N-acetylalanine is present on Ala-2. A GATase (Glutamine amidotransferase) region spans residues 2-365; sequence AALVLEDGSV…TVREAVAGNP (364 aa). The L-glutamine site is built by Ser-44, Gly-222, and Gly-224. In terms of domain architecture, Glutamine amidotransferase type-1 spans 177 to 363; that stretch reads RICALDCGLK…LETVREAVAG (187 aa). The active-site Nucleophile; for GATase activity is Cys-252. L-glutamine-binding residues include Leu-253, Gln-256, Asn-294, Gly-296, and Phe-297. Catalysis depends on for GATase activity residues His-336 and Glu-338. The linker stretch occupies residues 366 to 394; it reads GGQTVKERLVQRLCPPGLLIPGSGLPPPR. Residues 395-933 are CPSase A; the sequence is KVLILGSGGL…NTHDLDFRTP (539 aa). The interval 395–1455 is CPSase (Carbamoyl phosphate synthase); that stretch reads KVLILGSGGL…APPLKVHVDC (1061 aa). Residue Thr-456 is modified to Phosphothreonine; by MAPK1. ATP contacts are provided by Arg-515, Arg-555, Gly-561, Gly-562, Lys-592, Glu-599, Gly-625, Ile-626, His-627, Gln-668, and Glu-682. Residues 519–711 form the ATP-grasp 1 domain; that stretch reads AARMAEIGEH…LAYVAAKLAL (193 aa). Residues Gln-668, Glu-682, and Asn-684 each contribute to the Mg(2+) site. Residues Gln-668, Glu-682, and Asn-684 each coordinate Mn(2+). The residue at position 747 (Lys-747) is an N6-acetyllysine. Residues 934–1455 are CPSase B; the sequence is HVLVLGSGVY…APPLKVHVDC (522 aa). Ser-1038 carries the post-translational modification Phosphoserine. The ATP-grasp 2 domain maps to 1052-1243; that stretch reads SRLLDTIGIS…LVALATRIIM (192 aa). 10 residues coordinate ATP: Arg-1088, Lys-1127, Ile-1129, Glu-1134, Gly-1159, Val-1160, His-1161, Ser-1162, Gln-1202, and Glu-1214. Mg(2+) is bound by residues Gln-1202, Glu-1214, and Asn-1216. Residues Gln-1202, Glu-1214, and Asn-1216 each contribute to the Mn(2+) site. The region spanning 1308–1462 is the MGS-like domain; that stretch reads FKIPKKNILL…VDCMTSQKLV (155 aa). Ser-1406 bears the Phosphoserine; by PKA mark. At Lys-1411 the chain carries N6-acetyllysine. The interval 1456 to 1788 is DHOase (dihydroorotase); the sequence is MTSQKLVRLP…VKGTIRRVVL (333 aa). Zn(2+) contacts are provided by His-1471 and His-1473. Residues Arg-1475 and Asn-1505 each coordinate (S)-dihydroorotate. Zn(2+) is bound by residues Lys-1556, His-1590, Cys-1613, His-1614, and Glu-1637. Lys-1556 bears the N6-carboxylysine mark. A (S)-dihydroorotate-binding site is contributed by Arg-1661. Asp-1686 is a Zn(2+) binding site. Asp-1686 serves as the catalytic For DHOase activity. His-1690 and Pro-1702 together coordinate (S)-dihydroorotate. A linker region spans residues 1789 to 1917; the sequence is RGEVAYIDGQ…GLLHPQTSPL (129 aa). A disordered region spans residues 1813–1911; it reads PQGAVPQPPP…QNLGSSGLLH (99 aa). Residues 1825 to 1834 are compositionally biased toward low complexity; the sequence is PATTEITTTP. Ser-1859 is modified (phosphoserine; by RPS6KB1 and PKA). A compositionally biased stretch (basic and acidic residues) spans 1866–1878; sequence EEPKEKPSRKVVE. The residue at position 1873 (Ser-1873) is a Phosphoserine; by PKC; in vitro. A Phosphothreonine modification is found at Thr-1884. Residues 1899–1911 show a composition bias toward polar residues; the sequence is ASPQNLGSSGLLH. Phosphoserine occurs at positions 1900 and 1938. The interval 1918–2225 is ATCase (Aspartate transcarbamylase); sequence LHSLVGQHIL…ALLATVLGRF (308 aa). Carbamoyl phosphate is bound by residues Arg-1975 and Thr-1976. Lys-2003 is a binding site for L-aspartate. Positions 2024, 2052, and 2055 each coordinate carbamoyl phosphate. Arg-2085 and Arg-2146 together coordinate L-aspartate. Carbamoyl phosphate contacts are provided by Met-2185 and Pro-2186.

The protein in the N-terminal section; belongs to the CarA family. This sequence in the 2nd section; belongs to the CarB family. It in the 3rd section; belongs to the metallo-dependent hydrolases superfamily. DHOase family. CAD subfamily. In the C-terminal section; belongs to the aspartate/ornithine carbamoyltransferase superfamily. ATCase family. Homohexamer. Interacts with CIPC. Requires Zn(2+) as cofactor. Mg(2+) serves as cofactor. It depends on Mn(2+) as a cofactor. Activated by MAP kinase (Erk1/2) phosphorylation just prior to the S phase of the cell cycle, when the demand for pyrimidine nucleotides is greatest, and down-regulated as the cells emerge from S phase by protein kinase A (PKA) phosphorylation. Phosphorylation at Ser-1859 by RPS6KB1 downstream of MTOR promotes oligomerization and stimulates dihydroorotase activity. Phosphorylation at Ser-1406 reduces sensitivity to feedback inhibition by UTP.

Its subcellular location is the cytoplasm. The protein resides in the nucleus. The catalysed reaction is hydrogencarbonate + L-glutamine + 2 ATP + H2O = carbamoyl phosphate + L-glutamate + 2 ADP + phosphate + 2 H(+). It catalyses the reaction L-glutamine + H2O = L-glutamate + NH4(+). It carries out the reaction hydrogencarbonate + NH4(+) + 2 ATP = carbamoyl phosphate + 2 ADP + phosphate + 2 H(+). The enzyme catalyses carbamoyl phosphate + L-aspartate = N-carbamoyl-L-aspartate + phosphate + H(+). The catalysed reaction is (S)-dihydroorotate + H2O = N-carbamoyl-L-aspartate + H(+). The protein operates within pyrimidine metabolism; UMP biosynthesis via de novo pathway; (S)-dihydroorotate from bicarbonate: step 1/3. Its pathway is pyrimidine metabolism; UMP biosynthesis via de novo pathway; (S)-dihydroorotate from bicarbonate: step 2/3. It functions in the pathway pyrimidine metabolism; UMP biosynthesis via de novo pathway; (S)-dihydroorotate from bicarbonate: step 3/3. Allosterically regulated and controlled by phosphorylation. 5-phosphoribose 1-diphosphate (PRPP) is an activator while UMP and UTP are inhibitors of the CPSase reaction. In terms of biological role, multifunctional protein that encodes the first 3 enzymatic activities of the de novo pyrimidine pathway: carbamoylphosphate synthetase (CPSase; EC 6.3.5.5), aspartate transcarbamylase (ATCase; EC 2.1.3.2) and dihydroorotase (DHOase; EC 3.5.2.3). The CPSase-function is accomplished in 2 steps, by a glutamine-dependent amidotransferase activity (GATase) that binds and cleaves glutamine to produce ammonia, followed by an ammonium-dependent carbamoyl phosphate synthetase, which reacts with the ammonia, hydrogencarbonate and ATP to form carbamoyl phosphate. The endogenously produced carbamoyl phosphate is sequestered and channeled to the ATCase active site. ATCase then catalyzes the formation of carbamoyl-L-aspartate from L-aspartate and carbamoyl phosphate. In the last step, DHOase catalyzes the cyclization of carbamoyl aspartate to dihydroorotate. The protein is Multifunctional protein CAD (CAD) of Mesocricetus auratus (Golden hamster).